The chain runs to 1068 residues: Carbamoyl phosphate synthase large chain (1068 aa).

The interval 1 to 401 (MPLNKDIKKV…AFLKGTRSLE (401 aa)) is carboxyphosphate synthetic domain. The ATP site is built by R129, R169, G175, G176, K208, V210, E215, G241, I242, H243, Q284, and E298. One can recognise an ATP-grasp 1 domain in the interval 133 to 327 (RNVMSRINEP…IAKVASKIAL (195 aa)). Mg(2+)-binding residues include Q284, E298, and N300. The Mn(2+) site is built by Q284, E298, and N300. The segment at 402 to 549 (IGKYSLEHKK…YSTYDVYDEV (148 aa)) is oligomerization domain. The segment at 550-932 (EVSKNKKVIV…ALYKGFIGAN (383 aa)) is carbamoyl phosphate synthetic domain. The ATP-grasp 2 domain occupies 674–864 (DELLEKLKIA…IVDIATRVML (191 aa)). ATP is bound by residues R710, K749, L751, E755, G780, V781, H782, S783, Q823, and E835. Residues Q823, E835, and N837 each contribute to the Mg(2+) site. Residues Q823, E835, and N837 each contribute to the Mn(2+) site. The MGS-like domain occupies 933–1068 (ISIKKEKGTV…ETLYIFDLSN (136 aa)). The allosteric domain stretch occupies residues 933-1068 (ISIKKEKGTV…ETLYIFDLSN (136 aa)).

It belongs to the CarB family. Composed of two chains; the small (or glutamine) chain promotes the hydrolysis of glutamine to ammonia, which is used by the large (or ammonia) chain to synthesize carbamoyl phosphate. Tetramer of heterodimers (alpha,beta)4. It depends on Mg(2+) as a cofactor. Mn(2+) serves as cofactor.

The catalysed reaction is hydrogencarbonate + L-glutamine + 2 ATP + H2O = carbamoyl phosphate + L-glutamate + 2 ADP + phosphate + 2 H(+). The enzyme catalyses hydrogencarbonate + NH4(+) + 2 ATP = carbamoyl phosphate + 2 ADP + phosphate + 2 H(+). Its pathway is amino-acid biosynthesis; L-arginine biosynthesis; carbamoyl phosphate from bicarbonate: step 1/1. It participates in pyrimidine metabolism; UMP biosynthesis via de novo pathway; (S)-dihydroorotate from bicarbonate: step 1/3. Functionally, large subunit of the glutamine-dependent carbamoyl phosphate synthetase (CPSase). CPSase catalyzes the formation of carbamoyl phosphate from the ammonia moiety of glutamine, carbonate, and phosphate donated by ATP, constituting the first step of 2 biosynthetic pathways, one leading to arginine and/or urea and the other to pyrimidine nucleotides. The large subunit (synthetase) binds the substrates ammonia (free or transferred from glutamine from the small subunit), hydrogencarbonate and ATP and carries out an ATP-coupled ligase reaction, activating hydrogencarbonate by forming carboxy phosphate which reacts with ammonia to form carbamoyl phosphate. The protein is Carbamoyl phosphate synthase large chain of Clostridium botulinum (strain Langeland / NCTC 10281 / Type F).